The sequence spans 129 residues: MKVANDYEKRDNNSYYVDHGSEGTNITRDNDGFFEETAAEIAEPYRAADRSNDQDNDRSGGNVNEGRGIGYIALALSIISLFVLPVLLGAAGIIVGYIARRRGAQGLGAWAMGIGVVSLVLGIFIIPFF.

The segment at 44–63 is disordered; the sequence is PYRAADRSNDQDNDRSGGNV. Basic and acidic residues predominate over residues 46-58; it reads RAADRSNDQDNDR. Transmembrane regions (helical) follow at residues 78-98 and 109-129; these read IISL…VGYI and AWAM…IPFF.

It localises to the cell membrane. This is an uncharacterized protein from Bacillus subtilis (strain 168).